The chain runs to 481 residues: Serine--tRNA ligase (481 aa).

An L-serine-binding site is contributed by 284–286 (TAE). Position 315–317 (315–317 (RAE)) interacts with ATP. L-serine is bound at residue Glu-338. 405 to 408 (EISS) lines the ATP pocket. Ser-440 contributes to the L-serine binding site.

It belongs to the class-II aminoacyl-tRNA synthetase family. Type-1 seryl-tRNA synthetase subfamily. In terms of assembly, homodimer. The tRNA molecule binds across the dimer.

Its subcellular location is the cytoplasm. It catalyses the reaction tRNA(Ser) + L-serine + ATP = L-seryl-tRNA(Ser) + AMP + diphosphate + H(+). The enzyme catalyses tRNA(Sec) + L-serine + ATP = L-seryl-tRNA(Sec) + AMP + diphosphate + H(+). The protein operates within aminoacyl-tRNA biosynthesis; selenocysteinyl-tRNA(Sec) biosynthesis; L-seryl-tRNA(Sec) from L-serine and tRNA(Sec): step 1/1. Functionally, catalyzes the attachment of serine to tRNA(Ser). Is also able to aminoacylate tRNA(Sec) with serine, to form the misacylated tRNA L-seryl-tRNA(Sec), which will be further converted into selenocysteinyl-tRNA(Sec). In Rhodopseudomonas palustris (strain BisB18), this protein is Serine--tRNA ligase.